Reading from the N-terminus, the 412-residue chain is Putative phosphate permease PF1020 (412 aa).

A run of 10 helical transmembrane segments spans residues 7-27, 50-70, 88-108, 119-139, 143-163, 187-207, 213-233, 298-318, 335-355, and 384-404; these read MLADPILLITILLGFAMAWAI, AVIIAGVLEFMGAYFFGKTVT, VLIFGSIAALIGATIWLVIAT, SIIGGIVGYGIVYGGMSIVNW, IKVVLSWILSPIVGAIFAYLV, FWIGLAFVVIGTMFYIKVLHG, GFLKYGMPAGILTFIVVSLIL, WILALGGLGIAIGVATYGYKV, FTIDFSAATVVLIASWLGMPI, and DIIISWFVTVPAAGVIAGIIF.

It belongs to the inorganic phosphate transporter (PiT) (TC 2.A.20) family.

Its subcellular location is the cell membrane. Potential transporter for phosphate. In Pyrococcus furiosus (strain ATCC 43587 / DSM 3638 / JCM 8422 / Vc1), this protein is Putative phosphate permease PF1020.